A 627-amino-acid polypeptide reads, in one-letter code: MPKTLHEIPRERPATPLLDRASSPAELRRLGEADLETLADELRQYLLYTVGQTGGHFGAGLGVVELTIALHYVFDTPDDRLVWDVGHQAYPHKILTERRELMGTLRQKNGLAAFPRRAESEYDTFGVGHSSTSISAALGMAIAARLQGKERKSVAVIGDGALTAGMAFEALNHASEVDADMLVILNDNDMSISHNVGGLSNYLAKILSSRTYSSMREGSKKVLSRLPGAWEIARRTEEYAKGMLVPGTLFEELGWNYIGPIDGHDLPTLVATLRNMRDMKGPQFLHVVTKKGKGFAPAELDPIGYHAITKLEAPGSAPKKTGGPKYSSVFGQWLCDMAAQDARLLGITPAMKEGSDLVAFSERYPERYFDVAIAEQHAVTLAAGMACEGMKPVVAIYSTFLQRAYDQLIHDVAVQHLDVLFAIDRAGLVGEDGPTHAGSFDISYLRCIPGMLVMTPSDEDELRKLLTTGYLFDGPAAVRYPRGSGPNHPIDPDLQPVEIGKGVVRRRGGRVALLVFGVQLAEAMKVAESLDATVVDMRFVKPLDEALVRELAGSHELLVTIEENAVMGGAGSAVGEFLASEGLEVPLLQLGLPDYYVEHAKPSEMLAECGLDAAGIEKAVRQRLDRQ.

Residues His-87 and 128–130 (GHS) each bind thiamine diphosphate. Mg(2+) is bound at residue Asp-159. Thiamine diphosphate is bound by residues 160-161 (GA), Asn-188, Phe-295, and Glu-375. Residue Asn-188 coordinates Mg(2+).

It belongs to the transketolase family. DXPS subfamily. Homodimer. Mg(2+) serves as cofactor. It depends on thiamine diphosphate as a cofactor.

The catalysed reaction is D-glyceraldehyde 3-phosphate + pyruvate + H(+) = 1-deoxy-D-xylulose 5-phosphate + CO2. The protein operates within metabolic intermediate biosynthesis; 1-deoxy-D-xylulose 5-phosphate biosynthesis; 1-deoxy-D-xylulose 5-phosphate from D-glyceraldehyde 3-phosphate and pyruvate: step 1/1. In terms of biological role, catalyzes the acyloin condensation reaction between C atoms 2 and 3 of pyruvate and glyceraldehyde 3-phosphate to yield 1-deoxy-D-xylulose-5-phosphate (DXP). The sequence is that of 1-deoxy-D-xylulose-5-phosphate synthase from Pseudomonas aeruginosa (strain LESB58).